The sequence spans 758 residues: 5-methyltetrahydropteroyltriglutamate--homocysteine methyltransferase (758 aa).

5-methyltetrahydropteroyltri-L-glutamate contacts are provided by residues 17 to 20 (RELK) and lysine 114. L-homocysteine-binding positions include 429 to 431 (IGS) and glutamate 482. Residues 429-431 (IGS) and glutamate 482 each bind L-methionine. Residues 513 to 514 (RC) and tryptophan 559 contribute to the 5-methyltetrahydropteroyltri-L-glutamate site. Residue aspartate 597 participates in L-homocysteine binding. An L-methionine-binding site is contributed by aspartate 597. Residue glutamate 603 coordinates 5-methyltetrahydropteroyltri-L-glutamate. 3 residues coordinate Zn(2+): histidine 639, cysteine 641, and glutamate 663. Residue histidine 692 is the Proton donor of the active site. Cysteine 724 contacts Zn(2+).

It belongs to the vitamin-B12 independent methionine synthase family. The cofactor is Zn(2+).

The enzyme catalyses 5-methyltetrahydropteroyltri-L-glutamate + L-homocysteine = tetrahydropteroyltri-L-glutamate + L-methionine. It participates in amino-acid biosynthesis; L-methionine biosynthesis via de novo pathway; L-methionine from L-homocysteine (MetE route): step 1/1. Functionally, catalyzes the transfer of a methyl group from 5-methyltetrahydrofolate to homocysteine resulting in methionine formation. The chain is 5-methyltetrahydropteroyltriglutamate--homocysteine methyltransferase from Buchnera aphidicola subsp. Acyrthosiphon pisum (strain APS) (Acyrthosiphon pisum symbiotic bacterium).